We begin with the raw amino-acid sequence, 482 residues long: [Fructose-bisphosphate aldolase]-lysine N-methyltransferase, chloroplastic (482 aa).

A chloroplast-targeting transit peptide spans 1 to 57; the sequence is MSASVAVVSGFLRIPSIQKSQNPSFLFSRPKKSLVRPISASSSELPENVRNFWKWLR. In terms of domain architecture, SET spans 59 to 282; that stretch reads QGVVSGKSVA…AGEQVYIQYD (224 aa). Residues 75-77 and R217 contribute to the S-adenosyl-L-methionine site; that span reads EGL. Substrate-binding residues include R217, R221, and D234. Residue 237 to 238 coordinates S-adenosyl-L-methionine; sequence NH. The substrate site is built by Y249, Y281, and Y294.

This sequence belongs to the class V-like SAM-binding methyltransferase superfamily. Plant protein-lysine LSMT methyltransferase family.

It is found in the plastid. The protein resides in the chloroplast stroma. The enzyme catalyses [fructose-bisphosphate aldolase]-L-lysine + 3 S-adenosyl-L-methionine = [fructose-bisphosphate aldolase]-N(6),N(6),N(6)-trimethyl-L-lysine + 3 S-adenosyl-L-homocysteine + 3 H(+). Functionally, protein-lysine methyltransferase methylating chloroplastic fructose 1,6-bisphosphate aldolases. Can also use with low efficiency gamma-tocopherol methyltransferase as substrate, but not a cytosolic aldolase. Able to interact with unmethylated Rubisco, but unlike in pea, the complex is catalytically unproductive. This is [Fructose-bisphosphate aldolase]-lysine N-methyltransferase, chloroplastic (LSMT-L) from Arabidopsis thaliana (Mouse-ear cress).